An 87-amino-acid chain; its full sequence is UPF0250 protein ETA_23570 (87 aa).

The protein belongs to the UPF0250 family.

This is UPF0250 protein ETA_23570 from Erwinia tasmaniensis (strain DSM 17950 / CFBP 7177 / CIP 109463 / NCPPB 4357 / Et1/99).